The primary structure comprises 856 residues: Genome polyprotein (856 aa).

The 144-residue stretch at 141-284 (KLTESQMNHL…QGVLNSMVQF (144 aa)) folds into the Peptidase S30 domain. Active-site for P1 proteinase activity residues include His192, Asp201, and Ser235. The Involved in virions binding and aphid transmission signature appears at 592–594 (PTK). The Peptidase C6 domain occupies 618–740 (LYIAKQGYCY…ESEIKHYRVG (123 aa)). Residues Cys626 and His699 each act as for helper component proteinase activity in the active site.

It belongs to the potyviridae genome polyprotein family. Post-translationally, genome polyprotein of potyviruses undergoes post-translational proteolytic processing by the main proteinase NIa-pro resulting in the production of at least ten individual proteins. The P1 proteinase and the HC-pro cleave only their respective C-termini autocatalytically. 6K1 is essential for proper proteolytic separation of P3 from CI.

It catalyses the reaction Hydrolyzes a Gly-|-Gly bond at its own C-terminus, commonly in the sequence -Tyr-Xaa-Val-Gly-|-Gly, in the processing of the potyviral polyprotein.. Its function is as follows. Required for aphid transmission and also has proteolytic activity. Only cleaves a Gly-Gly dipeptide at its own C-terminus. Interacts with virions and aphid stylets. Acts as a suppressor of RNA-mediated gene silencing, also known as post-transcriptional gene silencing (PTGS), a mechanism of plant viral defense that limits the accumulation of viral RNAs. May have RNA-binding activity. This chain is Genome polyprotein, found in Potato virus Y (strain C) (PVY).